A 653-amino-acid chain; its full sequence is DNA polymerase (653 aa).

Belongs to the DNA polymerase type-B family.

It carries out the reaction DNA(n) + a 2'-deoxyribonucleoside 5'-triphosphate = DNA(n+1) + diphosphate. Replicates viral genomic DNA. The sequence is that of DNA polymerase from Acidianus convivator (ABV).